The sequence spans 287 residues: Hydroxyethylthiazole kinase (287 aa).

Residue M50 participates in substrate binding. Residues R126 and S185 each contribute to the ATP site. Position 212 (G212) interacts with substrate.

The protein belongs to the Thz kinase family. Requires Mg(2+) as cofactor.

The catalysed reaction is 5-(2-hydroxyethyl)-4-methylthiazole + ATP = 4-methyl-5-(2-phosphooxyethyl)-thiazole + ADP + H(+). It functions in the pathway cofactor biosynthesis; thiamine diphosphate biosynthesis; 4-methyl-5-(2-phosphoethyl)-thiazole from 5-(2-hydroxyethyl)-4-methylthiazole: step 1/1. Functionally, catalyzes the phosphorylation of the hydroxyl group of 4-methyl-5-beta-hydroxyethylthiazole (THZ). This chain is Hydroxyethylthiazole kinase, found in Methanobrevibacter smithii (strain ATCC 35061 / DSM 861 / OCM 144 / PS).